The following is a 146-amino-acid chain: Hemoglobin subunit beta-2 (146 aa).

Positions 2–146 (EWTDFERATI…VVSSLGRQYH (145 aa)) constitute a Globin domain. Residues histidine 63 and histidine 92 each contribute to the heme b site.

Belongs to the globin family. In terms of assembly, hb2 is a heterotetramer of two alpha chains and two beta-2 chains. As to expression, red blood cells.

Functionally, involved in oxygen transport from gills to the various peripheral tissues. This is Hemoglobin subunit beta-2 (hbb2) from Pseudaphritis urvillii (Congolli).